The primary structure comprises 212 residues: Adenylate kinase (212 aa).

10 to 15 (GAGKGT) contributes to the ATP binding site. The interval 30–59 (AIGDIFRAIIKTSSKDAEVINSYVEQGKLI) is NMP. AMP is bound by residues arginine 36, 57-59 (KLI), 85-88 (GYPR), and glutamine 92. Residues 122-160 (GRYSCKSCGKIYNDYFLKPRIDKICDVCKSSVFEYRKDD) form an LID region. Position 123 (arginine 123) interacts with ATP. Zn(2+) contacts are provided by cysteine 126 and cysteine 129. 132 to 133 (IY) contributes to the ATP binding site. 2 residues coordinate Zn(2+): cysteine 146 and cysteine 149. AMP-binding residues include arginine 157 and arginine 168. An ATP-binding site is contributed by lysine 196.

This sequence belongs to the adenylate kinase family. As to quaternary structure, monomer.

The protein resides in the cytoplasm. It carries out the reaction AMP + ATP = 2 ADP. The protein operates within purine metabolism; AMP biosynthesis via salvage pathway; AMP from ADP: step 1/1. Functionally, catalyzes the reversible transfer of the terminal phosphate group between ATP and AMP. Plays an important role in cellular energy homeostasis and in adenine nucleotide metabolism. The protein is Adenylate kinase of Rickettsia bellii (strain RML369-C).